We begin with the raw amino-acid sequence, 201 residues long: 3-isopropylmalate dehydratase small subunit (201 aa).

This sequence belongs to the LeuD family. LeuD type 1 subfamily. In terms of assembly, heterodimer of LeuC and LeuD.

The catalysed reaction is (2R,3S)-3-isopropylmalate = (2S)-2-isopropylmalate. It participates in amino-acid biosynthesis; L-leucine biosynthesis; L-leucine from 3-methyl-2-oxobutanoate: step 2/4. Its function is as follows. Catalyzes the isomerization between 2-isopropylmalate and 3-isopropylmalate, via the formation of 2-isopropylmaleate. The sequence is that of 3-isopropylmalate dehydratase small subunit from Shewanella frigidimarina (strain NCIMB 400).